The sequence spans 186 residues: Elongation factor P (186 aa).

The protein belongs to the elongation factor P family.

The protein localises to the cytoplasm. Its pathway is protein biosynthesis; polypeptide chain elongation. Functionally, involved in peptide bond synthesis. Stimulates efficient translation and peptide-bond synthesis on native or reconstituted 70S ribosomes in vitro. Probably functions indirectly by altering the affinity of the ribosome for aminoacyl-tRNA, thus increasing their reactivity as acceptors for peptidyl transferase. The protein is Elongation factor P of Laribacter hongkongensis (strain HLHK9).